Reading from the N-terminus, the 255-residue chain is Homeobox protein DLX-1 (255 aa).

A compositionally biased stretch (polar residues) spans 1–14 (MTMTTMPESLNSPV). Disordered regions lie at residues 1 to 38 (MTMTTMPESLNSPVSGKAVFMEFGPPNQQMSPSPMSHG) and 95 to 118 (SLAQSRLEDPGADSEKSTVVEGGE). Positions 25–36 (PPNQQMSPSPMS) are enriched in low complexity. The segment covering 100–112 (RLEDPGADSEKST) has biased composition (basic and acidic residues). Positions 128–187 (IRKPRTIYSSLQLQALNRRFQQTQYLALPERAELAASLGLTQTQVKIWFQNKRSKFKKLM) form a DNA-binding region, homeobox. The disordered stretch occupies residues 204–233 (ALSAGSPPVPPGWNPNSSSGKGSGSSAGSY). Low complexity predominate over residues 217–232 (NPNSSSGKGSGSSAGS).

The protein belongs to the distal-less homeobox family. Interacts with SMAD4 (via homeobox DNA-binding domain). Interacts (via homeobox DNA-binding domain) with POU4F2; this interaction suppresses DLX1-mediated transcriptional activity in postnatal retina and enhances retinal ganglion cell (RGC) differentiation. In terms of tissue distribution, expressed in a restricted region of the developing brain, within the diencephalon and the adjacent telencephalic regions.

The protein localises to the nucleus. Its function is as follows. Plays a role as a transcriptional activator or repressor. Inhibits several cytokine signaling pathways, such as TGFB1, activin-A/INHBA and BMP4 by interfering with the transcriptional stimulatory activity of transcription factors, such as MSX2, FAST2, SMAD2 and SMAD3 during hematopoietic cell differentiation. Plays a role in terminal differentiation of interneurons, such as amacrine and bipolar cells in the developing retina. Likely to play a regulatory role in the development of the ventral forebrain. May play a role in craniofacial patterning and morphogenesis and may be involved in the early development of diencephalic subdivisions. The chain is Homeobox protein DLX-1 (Dlx1) from Mus musculus (Mouse).